A 213-amino-acid chain; its full sequence is LexA repressor 2 (213 aa).

A DNA-binding region (H-T-H motif) is located at residues 27 to 47 (QTEIARAFGFKGVRAAQYHLE). Residues serine 133 and lysine 170 each act as for autocatalytic cleavage activity in the active site.

The protein belongs to the peptidase S24 family. In terms of assembly, homodimer.

It catalyses the reaction Hydrolysis of Ala-|-Gly bond in repressor LexA.. Represses a number of genes involved in the response to DNA damage (SOS response), including recA and lexA. In the presence of single-stranded DNA, RecA interacts with LexA causing an autocatalytic cleavage which disrupts the DNA-binding part of LexA, leading to derepression of the SOS regulon and eventually DNA repair. In Xanthomonas campestris pv. campestris (strain ATCC 33913 / DSM 3586 / NCPPB 528 / LMG 568 / P 25), this protein is LexA repressor 2.